The primary structure comprises 361 residues: Velvet complex subunit B (361 aa).

2 disordered regions span residues 1–36 and 308–340; these read MYAV…SLRQ and NGAP…VLLR. The segment covering 23–35 has biased composition (polar residues); sequence PSVQYPSGTTSLR. A Velvet domain is found at 47–353; the sequence is QDGRSWSLQV…SASALRYRVS (307 aa). A compositionally biased stretch (low complexity) spans 323 to 336; that stretch reads SLNPSRSSPPKSSP.

This sequence belongs to the velvet family. VelB subfamily. In terms of assembly, component of the heterotrimeric velvet complex composed of laeA, veA and velB; VeA acting as a bridging protein between laeA and velB. Interacts with velA. Forms a heterodimeric complex with vosA; the formation of the velB-vosA complex is light-dependent. Interacts with vosA.

The protein resides in the nucleus. It is found in the cytoplasm. In terms of biological role, component of the velvet transcription factor complex that controls sexual/asexual developmental ratio in response to light, promoting sexual development in the darkness while stimulating asexual sporulation under illumination. The velvet complex acts as a global regulator for secondary metabolite gene expression. Component of the velB-VosA heterodimeric complex that plays a dual role in activating genes associated with spore maturation and repressing certain development-associated genes. The velB-VosA complex binds DNA through the DNA-binding domain of vosA that recognizes an 11-nucleotide consensus sequence 5'-CTGGCCGCGGC-3' consisting of two motifs in the promoters of key developmental regulatory genes. Controls conidiophore formation. This Penicillium rubens (strain ATCC 28089 / DSM 1075 / NRRL 1951 / Wisconsin 54-1255) (Penicillium chrysogenum) protein is Velvet complex subunit B.